The sequence spans 540 residues: Chaperonin GroEL 2 (540 aa).

ATP contacts are provided by residues 30 to 33 (TLGP), Lys-51, 87 to 91 (DGTTT), Gly-415, 479 to 481 (NAA), and Asp-495.

It belongs to the chaperonin (HSP60) family. In terms of assembly, forms a cylinder of 14 subunits composed of two heptameric rings stacked back-to-back. Interacts with the co-chaperonin GroES.

The protein resides in the cytoplasm. The enzyme catalyses ATP + H2O + a folded polypeptide = ADP + phosphate + an unfolded polypeptide.. Its function is as follows. Together with its co-chaperonin GroES, plays an essential role in assisting protein folding. The GroEL-GroES system forms a nano-cage that allows encapsulation of the non-native substrate proteins and provides a physical environment optimized to promote and accelerate protein folding. The polypeptide is Chaperonin GroEL 2 (Burkholderia vietnamiensis (strain G4 / LMG 22486) (Burkholderia cepacia (strain R1808))).